The sequence spans 241 residues: Copper transport protein CTR3 (241 aa).

Topologically, residues 1-41 (MNMGGSSSTAAKKATCKISMLWNWYTIDTCFIARSWRNDTK) are lumenal. The helical transmembrane segment at 42 to 62 (GKFAGSCIGCFALVVVAQWLT) threads the bilayer. The Cytoplasmic segment spans residues 63-159 (RFSRQFDVEL…SCCTLITPVD (97 aa)). A helical membrane pass occupies residues 160–180 (LYPTFLDHMIRVTIFVLQWGL). The Lumenal segment spans residues 181–182 (SY). The helical transmembrane segment at 183–203 (IIMLLFMYYNGYIIISCLIGA) threads the bilayer. At 204-241 (IVGRFIFCYEPLGSLGANGSAQGTVSYDKESDDRKCCL) the chain is on the cytoplasmic side.

The protein belongs to the copper transporter (Ctr) (TC 1.A.56) family. SLC31A subfamily.

It localises to the cytoplasmic vesicle membrane. Functionally, required for high affinity copper (probably reduced Cu I) transport into the cell. The polypeptide is Copper transport protein CTR3 (CTR3) (Saccharomyces cerevisiae (strain ATCC 204508 / S288c) (Baker's yeast)).